Consider the following 209-residue polypeptide: Imidazole glycerol phosphate synthase subunit HisH (209 aa).

Residues 1 to 205 form the Glutamine amidotransferase type-1 domain; the sequence is MIAIIDYGMG…KGVVETWKSS (205 aa). The Nucleophile role is filled by Cys79. Active-site residues include His180 and Glu182.

As to quaternary structure, heterodimer of HisH and HisF.

It localises to the cytoplasm. The enzyme catalyses 5-[(5-phospho-1-deoxy-D-ribulos-1-ylimino)methylamino]-1-(5-phospho-beta-D-ribosyl)imidazole-4-carboxamide + L-glutamine = D-erythro-1-(imidazol-4-yl)glycerol 3-phosphate + 5-amino-1-(5-phospho-beta-D-ribosyl)imidazole-4-carboxamide + L-glutamate + H(+). The catalysed reaction is L-glutamine + H2O = L-glutamate + NH4(+). It functions in the pathway amino-acid biosynthesis; L-histidine biosynthesis; L-histidine from 5-phospho-alpha-D-ribose 1-diphosphate: step 5/9. IGPS catalyzes the conversion of PRFAR and glutamine to IGP, AICAR and glutamate. The HisH subunit catalyzes the hydrolysis of glutamine to glutamate and ammonia as part of the synthesis of IGP and AICAR. The resulting ammonia molecule is channeled to the active site of HisF. The polypeptide is Imidazole glycerol phosphate synthase subunit HisH (Bacillus thuringiensis (strain Al Hakam)).